Reading from the N-terminus, the 775-residue chain is Putative ankyrin repeat protein RBE_0801 (775 aa).

ANK repeat units follow at residues 66-95, 300-329, 331-356, 357-385, 447-476, and 523-552; these read HSLPQLSLTLQSSNNELVPSILSKITENTE, ATTVDLHSAVKFNNLAVLNRLLDKTEKVEN, ILQEAIQEHKIEIAEMLINSNKIKSF, TNDYLLVAINANNLPILKILLNKEENIVG, IPDVIFDSVIERGNTQIIKILLEKIASFDF, and GDDKILDIAIKLGDSSVVNNILDEKEKQGI.

The polypeptide is Putative ankyrin repeat protein RBE_0801 (Rickettsia bellii (strain RML369-C)).